Consider the following 223-residue polypeptide: Ribose-5-phosphate isomerase A (223 aa).

Substrate is bound by residues 32–35, 83–86, and 96–99; these read TGST, DGAD, and KGGG. Glutamate 105 (proton acceptor) is an active-site residue. A substrate-binding site is contributed by lysine 123.

This sequence belongs to the ribose 5-phosphate isomerase family. As to quaternary structure, homodimer.

The catalysed reaction is aldehydo-D-ribose 5-phosphate = D-ribulose 5-phosphate. It participates in carbohydrate degradation; pentose phosphate pathway; D-ribose 5-phosphate from D-ribulose 5-phosphate (non-oxidative stage): step 1/1. In terms of biological role, catalyzes the reversible conversion of ribose-5-phosphate to ribulose 5-phosphate. The protein is Ribose-5-phosphate isomerase A of Acinetobacter baumannii (strain ATCC 17978 / DSM 105126 / CIP 53.77 / LMG 1025 / NCDC KC755 / 5377).